The chain runs to 569 residues: Proline--tRNA ligase (569 aa).

This sequence belongs to the class-II aminoacyl-tRNA synthetase family. ProS type 1 subfamily. As to quaternary structure, homodimer.

Its subcellular location is the cytoplasm. The enzyme catalyses tRNA(Pro) + L-proline + ATP = L-prolyl-tRNA(Pro) + AMP + diphosphate. Its function is as follows. Catalyzes the attachment of proline to tRNA(Pro) in a two-step reaction: proline is first activated by ATP to form Pro-AMP and then transferred to the acceptor end of tRNA(Pro). As ProRS can inadvertently accommodate and process non-cognate amino acids such as alanine and cysteine, to avoid such errors it has two additional distinct editing activities against alanine. One activity is designated as 'pretransfer' editing and involves the tRNA(Pro)-independent hydrolysis of activated Ala-AMP. The other activity is designated 'posttransfer' editing and involves deacylation of mischarged Ala-tRNA(Pro). The misacylated Cys-tRNA(Pro) is not edited by ProRS. This Levilactobacillus brevis (strain ATCC 367 / BCRC 12310 / CIP 105137 / JCM 1170 / LMG 11437 / NCIMB 947 / NCTC 947) (Lactobacillus brevis) protein is Proline--tRNA ligase.